Reading from the N-terminus, the 365-residue chain is Probable receptor-like protein kinase At2g47060 (365 aa).

Residues 18–48 (DYGGRHNQAKHFPPGNDARHHQASETAQKGP) form a disordered region. Residues 73–353 (FGSNSLIGEG…IVVKALQPLL (281 aa)) enclose the Protein kinase domain. Residues 79–87 (IGEGSYGRV) and K101 contribute to the ATP site. At Y145 the chain carries Phosphotyrosine. D203 functions as the Proton acceptor in the catalytic mechanism. Phosphoserine is present on residues S207 and S237. A phosphothreonine mark is found at T238 and T243. At Y251 the chain carries Phosphotyrosine.

The protein belongs to the protein kinase superfamily. Ser/Thr protein kinase family.

It carries out the reaction L-seryl-[protein] + ATP = O-phospho-L-seryl-[protein] + ADP + H(+). The enzyme catalyses L-threonyl-[protein] + ATP = O-phospho-L-threonyl-[protein] + ADP + H(+). The protein is Probable receptor-like protein kinase At2g47060 of Arabidopsis thaliana (Mouse-ear cress).